Reading from the N-terminus, the 141-residue chain is Large ribosomal subunit protein uL16 (141 aa).

Belongs to the universal ribosomal protein uL16 family. As to quaternary structure, part of the 50S ribosomal subunit.

In terms of biological role, binds 23S rRNA and is also seen to make contacts with the A and possibly P site tRNAs. The chain is Large ribosomal subunit protein uL16 from Geobacillus thermodenitrificans (strain NG80-2).